The following is a 556-amino-acid chain: 2-succinyl-5-enolpyruvyl-6-hydroxy-3-cyclohexene-1-carboxylate synthase (556 aa).

This sequence belongs to the TPP enzyme family. MenD subfamily. As to quaternary structure, homodimer. Mg(2+) serves as cofactor. Requires Mn(2+) as cofactor. It depends on thiamine diphosphate as a cofactor.

It carries out the reaction isochorismate + 2-oxoglutarate + H(+) = 5-enolpyruvoyl-6-hydroxy-2-succinyl-cyclohex-3-ene-1-carboxylate + CO2. It participates in quinol/quinone metabolism; 1,4-dihydroxy-2-naphthoate biosynthesis; 1,4-dihydroxy-2-naphthoate from chorismate: step 2/7. Its pathway is quinol/quinone metabolism; menaquinone biosynthesis. Catalyzes the thiamine diphosphate-dependent decarboxylation of 2-oxoglutarate and the subsequent addition of the resulting succinic semialdehyde-thiamine pyrophosphate anion to isochorismate to yield 2-succinyl-5-enolpyruvyl-6-hydroxy-3-cyclohexene-1-carboxylate (SEPHCHC). This is 2-succinyl-5-enolpyruvyl-6-hydroxy-3-cyclohexene-1-carboxylate synthase from Escherichia coli (strain SMS-3-5 / SECEC).